We begin with the raw amino-acid sequence, 350 residues long: D-alanine--D-alanine ligase (350 aa).

The ATP-grasp domain maps to 143-344 (KRILSTFGIS…FKSLINKLIL (202 aa)). 172–227 (INNIKFPCCIKPSNQGSSFGVNVANDFISLKESIDVAFLYSKKILIEPFIQGREIE) is an ATP binding site. Residues aspartate 298, glutamate 311, and asparagine 313 each contribute to the Mg(2+) site.

This sequence belongs to the D-alanine--D-alanine ligase family. Requires Mg(2+) as cofactor. Mn(2+) serves as cofactor.

The protein resides in the cytoplasm. It carries out the reaction 2 D-alanine + ATP = D-alanyl-D-alanine + ADP + phosphate + H(+). It participates in cell wall biogenesis; peptidoglycan biosynthesis. Its function is as follows. Cell wall formation. The sequence is that of D-alanine--D-alanine ligase from Wigglesworthia glossinidia brevipalpis.